Reading from the N-terminus, the 335-residue chain is Tetraacyldisaccharide 4'-kinase (335 aa).

58–65 is a binding site for ATP; the sequence is TVGGSGKT.

It belongs to the LpxK family.

It carries out the reaction a lipid A disaccharide + ATP = a lipid IVA + ADP + H(+). The protein operates within glycolipid biosynthesis; lipid IV(A) biosynthesis; lipid IV(A) from (3R)-3-hydroxytetradecanoyl-[acyl-carrier-protein] and UDP-N-acetyl-alpha-D-glucosamine: step 6/6. Its function is as follows. Transfers the gamma-phosphate of ATP to the 4'-position of a tetraacyldisaccharide 1-phosphate intermediate (termed DS-1-P) to form tetraacyldisaccharide 1,4'-bis-phosphate (lipid IVA). This Shewanella sp. (strain ANA-3) protein is Tetraacyldisaccharide 4'-kinase.